The chain runs to 500 residues: Aldehyde dehydrogenase, mitochondrial (500 aa).

4 positions are modified to N6-acetyllysine: K35, K56, K61, and K142. NAD(+) is bound at residue 245 to 250 (GSTEVG). E268 functions as the Proton acceptor in the catalytic mechanism. Catalysis depends on C302, which acts as the Nucleophile. N6-acetyllysine occurs at positions 351, 358, 366, 390, 409, 411, 424, and 434.

It belongs to the aldehyde dehydrogenase family. In terms of assembly, homotetramer. In terms of processing, in response to mitochondrial stress, the precursor protein is ubiquitinated by the SIFI complex in the cytoplasm before mitochondrial import, leading to its degradation. Within the SIFI complex, UBR4 initiates ubiquitin chain that are further elongated or branched by KCMF1.

It localises to the mitochondrion matrix. The catalysed reaction is an aldehyde + NAD(+) + H2O = a carboxylate + NADH + 2 H(+). It participates in alcohol metabolism; ethanol degradation; acetate from ethanol: step 2/2. Functionally, required for clearance of cellular formaldehyde, a cytotoxic and carcinogenic metabolite that induces DNA damage. This chain is Aldehyde dehydrogenase, mitochondrial (ALDH2), found in Mesocricetus auratus (Golden hamster).